We begin with the raw amino-acid sequence, 431 residues long: uncharacterized protein (431 aa).

This is an uncharacterized protein from Acanthamoeba polyphaga (Amoeba).